The sequence spans 391 residues: Ammonium transporter Amt1 (391 aa).

The next 10 membrane-spanning stretches (helical) occupy residues 12-32, 51-71, 88-108, 112-132, 152-172, 192-212, 223-243, 261-281, 305-325, and 338-358; these read VFFF…FIAL, LDLA…SYGF, AWWM…TGGV, IKIL…YPIV, AGSG…AYVL, IPIA…FNIG, LASV…GGAL, VAVC…VGLL, IGPV…IPFL, and GQII…LIIY.

The protein belongs to the ammonia transporter channel (TC 1.A.11.2) family. As to quaternary structure, homotrimer. Interacts and forms a complex with GlnK1.

It is found in the cell membrane. Its activity is regulated as follows. Activity is regulated by the nitrogen regulatory protein GlnK1 via direct interaction. Formation of the GlnK1/Amt1 complex is decreased in the presence of Mg-ATP or 2-oxoglutarate. The presence of both effectors abolishes the formation of the complex. Functionally, involved in the uptake of ammonium/ammonia (NH(4)(+)/NH(3)). Transport is electrogenic. This is Ammonium transporter Amt1 from Methanocaldococcus jannaschii (strain ATCC 43067 / DSM 2661 / JAL-1 / JCM 10045 / NBRC 100440) (Methanococcus jannaschii).